Here is a 445-residue protein sequence, read N- to C-terminus: Phosphoglucosamine mutase (445 aa).

Residue S101 is the Phosphoserine intermediate of the active site. S101, D240, D242, and D244 together coordinate Mg(2+). S101 carries the post-translational modification Phosphoserine.

The protein belongs to the phosphohexose mutase family. The cofactor is Mg(2+). Activated by phosphorylation.

It carries out the reaction alpha-D-glucosamine 1-phosphate = D-glucosamine 6-phosphate. Functionally, catalyzes the conversion of glucosamine-6-phosphate to glucosamine-1-phosphate. This is Phosphoglucosamine mutase from Ectopseudomonas mendocina (strain ymp) (Pseudomonas mendocina).